A 610-amino-acid polypeptide reads, in one-letter code: MAIRQLSETLINQIAAGEVIERPASAAKELIENALDAGATRIEIATAGGGKALLRVSDNGSGMDAADLELAIRRHCTSKISETLEDIRTLGFRGEALPSIGSVARLSIASRKRDSAGGHEIAVAGGKVLHLRPAGANPGTIVEVRDLFFATPARLKFLKTEKAEAGAITEIVKRMAIAFPAVRFVLSGSDRATLEFPATGDDHLARMAQVLGKDFSDNAIALDAVREEISLTGFAGVPTFNRGNSAHQYAFVNGRPVQDKLILSAIRGAYAETIPSGRYPVAVLSIALDPALVDVNVHPAKSDVRFRDPGLVRGLIVGAIREALARDGSRAATTGASDMLRAFRPGFQPYGQRPQAPWSAETSPSRPYQPAPAFSERPQASFDGLSTPTARAEPQFSPDPVSPGLASPRPVAPETVGRYPLGAARAQIHANYIVAQTEDGLVIVDQHAAHERLVFEAMRKALHSKRLASQVLLIPEIVDIPEEDCDRLMLHAAEFAELGLAIERFGPGAIAVRETPAMLGEVDAHGLIRQLADEIAEWDTASGLSAKLEYVAATMACHGSVRSGRRLRPEEMNALLREMEVTPGSGQCNHGRPTYIELKLSDIERLFGRS.

Residues 351-406 (GQRPQAPWSAETSPSRPYQPAPAFSERPQASFDGLSTPTARAEPQFSPDPVSPGLA) form a disordered region.

This sequence belongs to the DNA mismatch repair MutL/HexB family.

Its function is as follows. This protein is involved in the repair of mismatches in DNA. It is required for dam-dependent methyl-directed DNA mismatch repair. May act as a 'molecular matchmaker', a protein that promotes the formation of a stable complex between two or more DNA-binding proteins in an ATP-dependent manner without itself being part of a final effector complex. This chain is DNA mismatch repair protein MutL, found in Rhizobium etli (strain ATCC 51251 / DSM 11541 / JCM 21823 / NBRC 15573 / CFN 42).